The following is a 1239-amino-acid chain: Protein strawberry notch homolog 1 (1239 aa).

Residues 684-837 (AQSNNNSPRD…SANSNTNSSF (154 aa)) are disordered. Residues 694 to 713 (SPCKENKIKKRKGEEVSREA) show a composition bias toward basic and acidic residues. The segment covering 728-744 (DESESESDASDNEESDN) has biased composition (acidic residues). Basic residues predominate over residues 778 to 790 (KEHKKVKEKKKKK). The segment covering 814–837 (FTSTVGTTTSSTNASANSNTNSSF) has biased composition (low complexity). Positions 838–866 (VTSQDAVERAQQMKKELLDKLEKLAEDLP) form a coiled coil.

Belongs to the SBNO family.

It localises to the nucleus. In terms of biological role, plays a crucial role in the regulation of neural stem cells (NSCs) proliferation. Enhances the phosphorylation of GSK3B through the PI3K-Akt signaling pathway, thereby upregulating the Wnt/beta-catenin signaling pathway and promoting the proliferation of NSCs. This is Protein strawberry notch homolog 1 (SBNO1) from Gallus gallus (Chicken).